The chain runs to 20 residues: Antiviral protein Y3 (20 aa).

In Pleurotus citrinopileatus (Golden oyster mushroom), this protein is Antiviral protein Y3.